The chain runs to 466 residues: Adenosylhomocysteinase (466 aa).

T57, D132, and E192 together coordinate substrate. 193–195 (TTT) serves as a coordination point for NAD(+). Residues K222 and D226 each contribute to the substrate site. Residues N227, 256–261 (GYGDVG), E279, N314, 335–337 (IGH), and N380 contribute to the NAD(+) site.

The protein belongs to the adenosylhomocysteinase family. Requires NAD(+) as cofactor.

The protein resides in the cytoplasm. The enzyme catalyses S-adenosyl-L-homocysteine + H2O = L-homocysteine + adenosine. The protein operates within amino-acid biosynthesis; L-homocysteine biosynthesis; L-homocysteine from S-adenosyl-L-homocysteine: step 1/1. Its function is as follows. May play a key role in the regulation of the intracellular concentration of adenosylhomocysteine. This Brucella melitensis biotype 2 (strain ATCC 23457) protein is Adenosylhomocysteinase.